The chain runs to 129 residues: Protein BUNDLE SHEATH DEFECTIVE 2, chloroplastic (129 aa).

A chloroplast-targeting transit peptide spans methionine 1 to lysine 43. The CR-type zinc-finger motif lies at glutamine 49 to threonine 123. Zn(2+) contacts are provided by cysteine 62, cysteine 65, asparagine 68, cysteine 73, cysteine 76, cysteine 97, cysteine 100, glutamate 105, cysteine 108, and cysteine 111.

Belongs to the BSD2 chaperone family. In terms of assembly, interacts with the RuBisCo large subunit (RbcL) assembled as an intermediate complex made of eight RbcL and eight BSD2 subunits. In terms of tissue distribution, expressed in shoot tissues, in both bundle sheath and mesophyll cells.

It is found in the plastid. It localises to the chloroplast stroma. In terms of biological role, chloroplast chaperone required for RuBisCo complex biogenesis and translational regulation of the RuBisCo large subunit (RbcL). Stabilizes an end-state assembly intermediate of eight RbcL subunits until the small subunits (RBCSs) become available to produce a complete stable RuBisCo complex containing eight small and eight large subunits. Involved in the differentiation of bundle sheath cells, especially chloroplast structure. This chain is Protein BUNDLE SHEATH DEFECTIVE 2, chloroplastic, found in Zea mays (Maize).